The following is a 225-amino-acid chain: Heptaprenylglyceryl phosphate synthase (225 aa).

Lys6 lines the sn-glycerol 1-phosphate pocket. Residues Asp8 and Thr34 each contribute to the Mg(2+) site. Sn-glycerol 1-phosphate-binding positions include 153-158 (YVEYSG), Gly183, and 203-204 (GN).

The protein belongs to the GGGP/HepGP synthase family. Group I subfamily. As to quaternary structure, homodimer. Mg(2+) is required as a cofactor.

The catalysed reaction is sn-glycerol 1-phosphate + all-trans-heptaprenyl diphosphate = 3-heptaprenyl-sn-glycero-1-phosphate + diphosphate. It participates in membrane lipid metabolism; glycerophospholipid metabolism. Prenyltransferase that catalyzes in vivo the transfer of the heptaprenyl moiety of heptaprenyl pyrophosphate (HepPP; 35 carbon atoms) to the C3 hydroxyl of sn-glycerol-1-phosphate (G1P), producing heptaprenylglyceryl phosphate (HepGP). This reaction is an ether-bond-formation step in the biosynthesis of archaea-type G1P-based membrane lipids found in Bacillales. The sequence is that of Heptaprenylglyceryl phosphate synthase from Listeria monocytogenes serotype 4a (strain HCC23).